Here is a 356-residue protein sequence, read N- to C-terminus: Tyrosine recombinase XerS (356 aa).

Residues 16 to 121 (LMPWFVLEYY…ALSSLYKYLT (106 aa)) enclose the Core-binding (CB) domain. Residues 169–354 (KFLDYVENEY…VNDEQKNALD (186 aa)) form the Tyr recombinase domain. Residues R210, K234, H306, R309, and H332 contribute to the active site. The O-(3'-phospho-DNA)-tyrosine intermediate role is filled by Y341.

This sequence belongs to the 'phage' integrase family. XerS subfamily.

Its subcellular location is the cytoplasm. FtsK is required for recombination. Functionally, site-specific tyrosine recombinase, which acts by catalyzing the cutting and rejoining of the recombining DNA molecules. Essential to convert dimers of the bacterial chromosome into monomers to permit their segregation at cell division. This chain is Tyrosine recombinase XerS, found in Streptococcus thermophilus (strain CNRZ 1066).